A 328-amino-acid chain; its full sequence is Phenylalanine--tRNA ligase alpha subunit (328 aa).

E253 is a binding site for Mg(2+).

It belongs to the class-II aminoacyl-tRNA synthetase family. Phe-tRNA synthetase alpha subunit type 1 subfamily. As to quaternary structure, tetramer of two alpha and two beta subunits. Mg(2+) serves as cofactor.

It localises to the cytoplasm. The enzyme catalyses tRNA(Phe) + L-phenylalanine + ATP = L-phenylalanyl-tRNA(Phe) + AMP + diphosphate + H(+). The chain is Phenylalanine--tRNA ligase alpha subunit from Coxiella burnetii (strain Dugway 5J108-111).